Here is a 517-residue protein sequence, read N- to C-terminus: FERM domain-containing protein 5 (517 aa).

In terms of domain architecture, FERM spans 17-298; sequence YSCTVRLLDD…ENQAFYKLEK (282 aa). The tract at residues 308 to 353 is interaction with ROCK1; sequence SNLFFKGSRFRYSGRVAKEVMESSAKIKREPPEIHRAGMVPSRSCP. A disordered region spans residues 344–367; the sequence is AGMVPSRSCPSITHGPRLSSVPRT. Residue Ser-375 is modified to Phosphoserine. 2 disordered regions span residues 385–408 and 485–517; these read DSAH…VRSS and GHGG…VPLD. The span at 388 to 398 shows a compositional bias: polar residues; that stretch reads HSTPVRSSSHG. Over residues 498–517 the composition is skewed to low complexity; that stretch reads KGPQLQQQQWKGWGKSVPLD.

Interacts with CTNND1, ITGB5 (via cytoplasmic domain) and ROCK1.

It localises to the cell junction. The protein resides in the adherens junction. Its function is as follows. May be involved in regulation of cell migration. May regulate cell-matrix interactions via its interaction with ITGB5 and modifying ITGB5 cytoplasmic tail interactions such as with FERMT2 and TLN1. May regulate ROCK1 kinase activity possibly involved in regulation of actin stress fiber formation. This is FERM domain-containing protein 5 (Frmd5) from Mus musculus (Mouse).